The sequence spans 202 residues: Small ribosomal subunit protein uS5 (202 aa).

The segment covering Met-1–Gly-13 has biased composition (gly residues). Positions Met-1–Lys-31 are disordered. Over residues Ser-14–Ser-23 the composition is skewed to basic and acidic residues. In terms of domain architecture, S5 DRBM spans Tyr-34–Val-97.

The protein belongs to the universal ribosomal protein uS5 family. In terms of assembly, part of the 30S ribosomal subunit. Contacts proteins S4 and S8.

Its function is as follows. With S4 and S12 plays an important role in translational accuracy. Functionally, located at the back of the 30S subunit body where it stabilizes the conformation of the head with respect to the body. The sequence is that of Small ribosomal subunit protein uS5 from Frankia alni (strain DSM 45986 / CECT 9034 / ACN14a).